A 657-amino-acid chain; its full sequence is Glycogen debranching enzyme (657 aa).

Asp-336 serves as the catalytic Nucleophile. Catalysis depends on Glu-371, which acts as the Proton donor. Residues 460 to 479 (ANGEENRDGTNNNYSNNHGK) form a disordered region.

The protein belongs to the glycosyl hydrolase 13 family.

It carries out the reaction Hydrolysis of (1-&gt;6)-alpha-D-glucosidic linkages to branches with degrees of polymerization of three or four glucose residues in limit dextrin.. The protein operates within glycan degradation; glycogen degradation. Removes maltotriose and maltotetraose chains that are attached by 1,6-alpha-linkage to the limit dextrin main chain, generating a debranched limit dextrin. The polypeptide is Glycogen debranching enzyme (Escherichia coli O6:K15:H31 (strain 536 / UPEC)).